A 524-amino-acid polypeptide reads, in one-letter code: Chromosomal replication initiator protein DnaA (524 aa).

Residues 1–105 are domain I, interacts with DnaA modulators; the sequence is MSQNSSSLLE…EQEIPETPAQ (105 aa). Residues 95–183 form a disordered region; the sequence is PEQEIPETPA…PAHNPNREVS (89 aa). The domain II stretch occupies residues 106–182; sequence QEFKYQPDAP…TPAHNPNREV (77 aa). A compositionally biased stretch (pro residues) spans 148-158; that stretch reads APEPHPAPIAD. The domain III, AAA+ region stretch occupies residues 183–399; it reads SLNPKYTFES…GALIRVSAYS (217 aa). ATP-binding residues include Gly-227, Gly-229, Lys-230, and Thr-231. The tract at residues 400-524 is domain IV, binds dsDNA; it reads SLINQPIDKE…TQLIKSRGRN (125 aa).

The protein belongs to the DnaA family. As to quaternary structure, oligomerizes as a right-handed, spiral filament on DNA at oriC.

It is found in the cytoplasm. In terms of biological role, plays an essential role in the initiation and regulation of chromosomal replication. ATP-DnaA binds to the origin of replication (oriC) to initiate formation of the DNA replication initiation complex once per cell cycle. Binds the DnaA box (a 9 base pair repeat at the origin) and separates the double-stranded (ds)DNA. Forms a right-handed helical filament on oriC DNA; dsDNA binds to the exterior of the filament while single-stranded (ss)DNA is stabiized in the filament's interior. The ATP-DnaA-oriC complex binds and stabilizes one strand of the AT-rich DNA unwinding element (DUE), permitting loading of DNA polymerase. After initiation quickly degrades to an ADP-DnaA complex that is not apt for DNA replication. Binds acidic phospholipids. This chain is Chromosomal replication initiator protein DnaA, found in Corynebacterium glutamicum (strain R).